Reading from the N-terminus, the 235-residue chain is Ribonuclease 3 (235 aa).

Residues 8–137 (PAELARRIGI…VIGAIFLSGG (130 aa)) form the RNase III domain. E50 is a Mg(2+) binding site. The active site involves D54. 2 residues coordinate Mg(2+): D123 and E126. E126 is an active-site residue. The region spanning 163-232 (DNKTAFQEWV…AGRAMREWAG (70 aa)) is the DRBM domain. Residues 211–235 (QGRTKKEAEQQAAGRAMREWAGRKG) are disordered. The span at 226–235 (AMREWAGRKG) shows a compositional bias: basic and acidic residues.

Belongs to the ribonuclease III family. In terms of assembly, homodimer. Mg(2+) serves as cofactor.

It localises to the cytoplasm. It catalyses the reaction Endonucleolytic cleavage to 5'-phosphomonoester.. In terms of biological role, digests double-stranded RNA. Involved in the processing of primary rRNA transcript to yield the immediate precursors to the large and small rRNAs (23S and 16S). Processes some mRNAs, and tRNAs when they are encoded in the rRNA operon. Processes pre-crRNA and tracrRNA of type II CRISPR loci if present in the organism. The polypeptide is Ribonuclease 3 (Heliobacterium modesticaldum (strain ATCC 51547 / Ice1)).